The chain runs to 145 residues: MAKKLTATVELMLPAGQATPAPPVGPALGQHGINIMEFVKQFNAASKDMEPGTIVPVVISIYADRSFTFIMKTPPTSFLLKKAAKVQKGSSDPKRQKAGKITLNQLKEIAQLKAKDMNTQDLDAVMRTIAGTARSMGIEIEGYKG.

It belongs to the universal ribosomal protein uL11 family. As to quaternary structure, part of the ribosomal stalk of the 50S ribosomal subunit. Interacts with L10 and the large rRNA to form the base of the stalk. L10 forms an elongated spine to which L12 dimers bind in a sequential fashion forming a multimeric L10(L12)X complex. In terms of processing, one or more lysine residues are methylated.

Forms part of the ribosomal stalk which helps the ribosome interact with GTP-bound translation factors. This is Large ribosomal subunit protein uL11 from Hydrogenobaculum sp. (strain Y04AAS1).